A 160-amino-acid chain; its full sequence is Small ribosomal subunit protein uS7 (160 aa).

It belongs to the universal ribosomal protein uS7 family. In terms of assembly, part of the 30S ribosomal subunit. Contacts proteins S9 and S11.

Functionally, one of the primary rRNA binding proteins, it binds directly to 16S rRNA where it nucleates assembly of the head domain of the 30S subunit. Is located at the subunit interface close to the decoding center, probably blocks exit of the E-site tRNA. This chain is Small ribosomal subunit protein uS7, found in Rickettsia akari (strain Hartford).